The sequence spans 134 residues: UPF0299 membrane protein KPK_1586 (134 aa).

4 consecutive transmembrane segments (helical) span residues 5–25 (LTIIWQYLRAFVLIYACLYAG), 26–46 (IFIAGLLPITIPGSIIGMLIL), 66–86 (ILIRYMALLFVPIGVGVMQYW), and 93–113 (LGPVVISCAISTLVVFVVVSW).

This sequence belongs to the UPF0299 family.

Its subcellular location is the cell inner membrane. In Klebsiella pneumoniae (strain 342), this protein is UPF0299 membrane protein KPK_1586.